We begin with the raw amino-acid sequence, 205 residues long: Proteasome subunit beta type-3 (205 aa).

The protein belongs to the peptidase T1B family. The 26S proteasome consists of a 20S proteasome core and two 19S regulatory subunits. The 20S proteasome core is composed of 28 subunits that are arranged in four stacked rings, resulting in a barrel-shaped structure. The two end rings are each formed by seven alpha subunits, and the two central rings are each formed by seven beta subunits. The catalytic chamber with the active sites is on the inside of the barrel.

Its subcellular location is the cytoplasm. The protein localises to the nucleus. Its function is as follows. Non-catalytic component of the proteasome, a multicatalytic proteinase complex which is characterized by its ability to cleave peptides with Arg, Phe, Tyr, Leu, and Glu adjacent to the leaving group at neutral or slightly basic pH. The proteasome has an ATP-dependent proteolytic activity. The chain is Proteasome subunit beta type-3 (psmB3) from Dictyostelium discoideum (Social amoeba).